Consider the following 632-residue polypeptide: X-ray repair cross-complementing protein 5 (632 aa).

The active-site Schiff-base intermediate with DNA; for 5'-deoxyribose-5-phosphate lyase activity is arginine 52. Residues 283–490 enclose the Ku domain; the sequence is LYLNKDLSFS…VDKMKGIIQK (208 aa). A disordered region spans residues 555 to 578; sequence DYSPEGKAAKRKQAGDAQAEKRPK. An SAP domain is found at 595 to 629; that stretch reads LGKLTVSALKDTCRHYGLRSGGKKQELIDALTEYF.

This sequence belongs to the ku70 family. As to quaternary structure, heterodimer composed of XRCC5/Ku80 and XRCC6/Ku70. Component of the core long-range non-homologous end joining (NHEJ) complex (also named DNA-PK complex) composed of PRKDC, LIG4, XRCC4, XRCC6/Ku70, XRCC5/Ku86 and NHEJ1/XLF. Additional component of the NHEJ complex includes PAXX. Following autophosphorylation, PRKDC dissociates from DNA, leading to formation of the short-range NHEJ complex, composed of LIG4, XRCC4, XRCC6/Ku70, XRCC5/Ku86 and NHEJ1/XLF. Phosphorylated on serine residues.

The protein localises to the nucleus. The protein resides in the chromosome. Its function is as follows. Single-stranded DNA-dependent ATP-dependent helicase that plays a key role in DNA non-homologous end joining (NHEJ) by recruiting DNA-PK to DNA. Required for double-strand break repair and V(D)J recombination. Also has a role in chromosome translocation. Has a role in chromosome translocation. The DNA helicase II complex binds preferentially to fork-like ends of double-stranded DNA in a cell cycle-dependent manner. It works in the 3'-5' direction. During NHEJ, the XRCC5-XRRC6 dimer performs the recognition step: it recognizes and binds to the broken ends of the DNA and protects them from further resection. Binding to DNA may be mediated by XRCC6. The XRCC5-XRRC6 dimer acts as a regulatory subunit of the DNA-dependent protein kinase complex DNA-PK by increasing the affinity of the catalytic subunit PRKDC to DNA by 100-fold. The XRCC5-XRRC6 dimer is probably involved in stabilizing broken DNA ends and bringing them together. The assembly of the DNA-PK complex to DNA ends is required for the NHEJ ligation step. Probably also acts as a 5'-deoxyribose-5-phosphate lyase (5'-dRP lyase), by catalyzing the beta-elimination of the 5' deoxyribose-5-phosphate at an abasic site near double-strand breaks. 5'-dRP lyase activity allows to 'clean' the termini of abasic sites, a class of nucleotide damage commonly associated with strand breaks, before such broken ends can be joined. The XRCC5-XRRC6 dimer together with APEX1 acts as a negative regulator of transcription. The polypeptide is X-ray repair cross-complementing protein 5 (XRCC6) (Gallus gallus (Chicken)).